The chain runs to 225 residues: UPF0758 protein XOO0462 (225 aa).

Positions 102-224 (ALSDPPSVGR…PVSLAERGWL (123 aa)) constitute an MPN domain. Zn(2+) is bound by residues His173, His175, and Asp186. The JAMM motif signature appears at 173 to 186 (HNHPSGNPEPSEAD).

Belongs to the UPF0758 family.

The protein is UPF0758 protein XOO0462 of Xanthomonas oryzae pv. oryzae (strain MAFF 311018).